A 141-amino-acid polypeptide reads, in one-letter code: Nucleoside diphosphate kinase (141 aa).

Residues K11, F59, R87, T93, R104, and N114 each contribute to the ATP site. The Pros-phosphohistidine intermediate role is filled by H117.

The protein belongs to the NDK family. Homotetramer. Mg(2+) serves as cofactor.

It localises to the cytoplasm. It carries out the reaction a 2'-deoxyribonucleoside 5'-diphosphate + ATP = a 2'-deoxyribonucleoside 5'-triphosphate + ADP. It catalyses the reaction a ribonucleoside 5'-diphosphate + ATP = a ribonucleoside 5'-triphosphate + ADP. Major role in the synthesis of nucleoside triphosphates other than ATP. The ATP gamma phosphate is transferred to the NDP beta phosphate via a ping-pong mechanism, using a phosphorylated active-site intermediate. This is Nucleoside diphosphate kinase from Histophilus somni (strain 129Pt) (Haemophilus somnus).